We begin with the raw amino-acid sequence, 80 residues long: Large ribosomal subunit protein bL31 (80 aa).

The protein belongs to the bacterial ribosomal protein bL31 family. Type A subfamily. In terms of assembly, part of the 50S ribosomal subunit.

Functionally, binds the 23S rRNA. This Nostoc punctiforme (strain ATCC 29133 / PCC 73102) protein is Large ribosomal subunit protein bL31.